We begin with the raw amino-acid sequence, 184 residues long: Photosystem I assembly protein Ycf4 (184 aa).

A run of 2 helical transmembrane segments spans residues 22-42 and 57-77; these read FCWA…GTSS and IVFF…LFIS.

The protein belongs to the Ycf4 family.

It localises to the plastid. The protein localises to the chloroplast thylakoid membrane. Seems to be required for the assembly of the photosystem I complex. This is Photosystem I assembly protein Ycf4 from Lactuca sativa (Garden lettuce).